The chain runs to 104 residues: Large ribosomal subunit protein uL24 (104 aa).

The protein belongs to the universal ribosomal protein uL24 family. Part of the 50S ribosomal subunit.

Its function is as follows. One of two assembly initiator proteins, it binds directly to the 5'-end of the 23S rRNA, where it nucleates assembly of the 50S subunit. Functionally, one of the proteins that surrounds the polypeptide exit tunnel on the outside of the subunit. In Dichelobacter nodosus (strain VCS1703A), this protein is Large ribosomal subunit protein uL24.